The primary structure comprises 1343 residues: DNA-directed RNA polymerase subunit beta (1343 aa).

Belongs to the RNA polymerase beta chain family. The RNAP catalytic core consists of 2 alpha, 1 beta, 1 beta' and 1 omega subunit. When a sigma factor is associated with the core the holoenzyme is formed, which can initiate transcription.

It carries out the reaction RNA(n) + a ribonucleoside 5'-triphosphate = RNA(n+1) + diphosphate. Functionally, DNA-dependent RNA polymerase catalyzes the transcription of DNA into RNA using the four ribonucleoside triphosphates as substrates. This is DNA-directed RNA polymerase subunit beta from Shewanella woodyi (strain ATCC 51908 / MS32).